A 657-amino-acid polypeptide reads, in one-letter code: Threonine--tRNA ligase (657 aa).

The region spanning 7–70 is the TGS domain; that stretch reads SQTQVTVTLP…SEDASIEIVT (64 aa). The segment at 253–555 is catalytic; that stretch reads DHRKLGAELE…LIEHTGGNFP (303 aa). 3 residues coordinate Zn(2+): Cys-351, His-402, and His-532.

The protein belongs to the class-II aminoacyl-tRNA synthetase family. As to quaternary structure, homodimer. Zn(2+) serves as cofactor.

The protein resides in the cytoplasm. The catalysed reaction is tRNA(Thr) + L-threonine + ATP = L-threonyl-tRNA(Thr) + AMP + diphosphate + H(+). Functionally, catalyzes the attachment of threonine to tRNA(Thr) in a two-step reaction: L-threonine is first activated by ATP to form Thr-AMP and then transferred to the acceptor end of tRNA(Thr). Also edits incorrectly charged L-seryl-tRNA(Thr). In Prosthecochloris aestuarii (strain DSM 271 / SK 413), this protein is Threonine--tRNA ligase.